Here is a 353-residue protein sequence, read N- to C-terminus: Probable dual-specificity RNA methyltransferase RlmN (353 aa).

E104 serves as the catalytic Proton acceptor. One can recognise a Radical SAM core domain in the interval 112-341; the sequence is DGGRKTICIS…ILNRRSPGKD (230 aa). An intrachain disulfide couples C119 to C346. 3 residues coordinate [4Fe-4S] cluster: C126, C130, and C133. S-adenosyl-L-methionine contacts are provided by residues 173–174, S205, 228–230, and N304; these read GE and SLN. C346 (S-methylcysteine intermediate) is an active-site residue.

It belongs to the radical SAM superfamily. RlmN family. Requires [4Fe-4S] cluster as cofactor.

The protein resides in the cytoplasm. It catalyses the reaction adenosine(2503) in 23S rRNA + 2 reduced [2Fe-2S]-[ferredoxin] + 2 S-adenosyl-L-methionine = 2-methyladenosine(2503) in 23S rRNA + 5'-deoxyadenosine + L-methionine + 2 oxidized [2Fe-2S]-[ferredoxin] + S-adenosyl-L-homocysteine. The catalysed reaction is adenosine(37) in tRNA + 2 reduced [2Fe-2S]-[ferredoxin] + 2 S-adenosyl-L-methionine = 2-methyladenosine(37) in tRNA + 5'-deoxyadenosine + L-methionine + 2 oxidized [2Fe-2S]-[ferredoxin] + S-adenosyl-L-homocysteine. Its function is as follows. Specifically methylates position 2 of adenine 2503 in 23S rRNA and position 2 of adenine 37 in tRNAs. This chain is Probable dual-specificity RNA methyltransferase RlmN, found in Leptospira interrogans serogroup Icterohaemorrhagiae serovar Lai (strain 56601).